The sequence spans 258 residues: SufE-like protein 2, chloroplastic (258 aa).

Residues 1–32 (MNTSSSFKALASPPLISTSRPTTKSFPNPRFT) are disordered. Polar residues predominate over residues 15 to 32 (LISTSRPTTKSFPNPRFT). Residue Cys-122 is the Cysteine persulfide intermediate of the active site.

Belongs to the SufE family. In terms of tissue distribution, highly expressed in flowers and pollen, and at low levels in roots, leaves and stems.

It localises to the plastid. Its subcellular location is the chloroplast. The protein operates within cofactor biosynthesis; iron-sulfur cluster biosynthesis. Its function is as follows. Participates in cysteine desulfurization mediated by NFS2. Can activate the cysteine desulfurase activity of NFS2 in vitro. Cysteine desulfurization mobilizes sulfur from L-cysteine to yield L-alanine and supplies the inorganic sulfur for iron-sulfur (Fe-S) cluster formation. The sequence is that of SufE-like protein 2, chloroplastic (SUFE2) from Arabidopsis thaliana (Mouse-ear cress).